We begin with the raw amino-acid sequence, 157 residues long: 6,7-dimethyl-8-ribityllumazine synthase 1 (157 aa).

Residues phenylalanine 22, 53–55 (ALE), and 82–84 (TVI) each bind 5-amino-6-(D-ribitylamino)uracil. (2S)-2-hydroxy-3-oxobutyl phosphate is bound at residue 87–88 (ET). The Proton donor role is filled by histidine 90. Residue asparagine 115 participates in 5-amino-6-(D-ribitylamino)uracil binding. Arginine 129 contacts (2S)-2-hydroxy-3-oxobutyl phosphate.

This sequence belongs to the DMRL synthase family.

It carries out the reaction (2S)-2-hydroxy-3-oxobutyl phosphate + 5-amino-6-(D-ribitylamino)uracil = 6,7-dimethyl-8-(1-D-ribityl)lumazine + phosphate + 2 H2O + H(+). Its pathway is cofactor biosynthesis; riboflavin biosynthesis; riboflavin from 2-hydroxy-3-oxobutyl phosphate and 5-amino-6-(D-ribitylamino)uracil: step 1/2. Functionally, catalyzes the formation of 6,7-dimethyl-8-ribityllumazine by condensation of 5-amino-6-(D-ribitylamino)uracil with 3,4-dihydroxy-2-butanone 4-phosphate. This is the penultimate step in the biosynthesis of riboflavin. This Brucella suis biovar 1 (strain 1330) protein is 6,7-dimethyl-8-ribityllumazine synthase 1.